The chain runs to 159 residues: Ribosomal RNA large subunit methyltransferase H (159 aa).

S-adenosyl-L-methionine-binding positions include leucine 76, glycine 108, and 127–132 (FSKMTF).

Belongs to the RNA methyltransferase RlmH family. As to quaternary structure, homodimer.

The protein resides in the cytoplasm. It carries out the reaction pseudouridine(1915) in 23S rRNA + S-adenosyl-L-methionine = N(3)-methylpseudouridine(1915) in 23S rRNA + S-adenosyl-L-homocysteine + H(+). Functionally, specifically methylates the pseudouridine at position 1915 (m3Psi1915) in 23S rRNA. This is Ribosomal RNA large subunit methyltransferase H from Staphylococcus aureus (strain Mu3 / ATCC 700698).